A 299-amino-acid polypeptide reads, in one-letter code: Probable lipid kinase YegS-like (299 aa).

In terms of domain architecture, DAGKc spans 2-133 (ATYPESLLIL…VDIAQVNDKT (132 aa)). ATP is bound by residues T40, 66 to 72 (GDGTINE), and T95. Mg(2+)-binding residues include L215, D218, and L220. The active-site Proton acceptor is E271.

It belongs to the diacylglycerol/lipid kinase family. YegS lipid kinase subfamily. Requires Mg(2+) as cofactor. Ca(2+) is required as a cofactor.

It is found in the cytoplasm. Functionally, probably phosphorylates lipids; the in vivo substrate is unknown. This chain is Probable lipid kinase YegS-like, found in Enterobacter sp. (strain 638).